The sequence spans 273 residues: 3-methyl-2-oxobutanoate hydroxymethyltransferase 2 (273 aa).

Asp-50 and Asp-89 together coordinate Mg(2+). 3-methyl-2-oxobutanoate-binding positions include 50–51 (DS), Asp-89, and Lys-119. Residue Glu-121 coordinates Mg(2+). Glu-188 acts as the Proton acceptor in catalysis.

This sequence belongs to the PanB family. Homodecamer; pentamer of dimers. Mg(2+) is required as a cofactor.

It is found in the cytoplasm. The catalysed reaction is 3-methyl-2-oxobutanoate + (6R)-5,10-methylene-5,6,7,8-tetrahydrofolate + H2O = 2-dehydropantoate + (6S)-5,6,7,8-tetrahydrofolate. Its pathway is cofactor biosynthesis; (R)-pantothenate biosynthesis; (R)-pantoate from 3-methyl-2-oxobutanoate: step 1/2. In terms of biological role, catalyzes the reversible reaction in which hydroxymethyl group from 5,10-methylenetetrahydrofolate is transferred onto alpha-ketoisovalerate to form ketopantoate. This Zymomonas mobilis subsp. mobilis (strain ATCC 31821 / ZM4 / CP4) protein is 3-methyl-2-oxobutanoate hydroxymethyltransferase 2.